A 223-amino-acid chain; its full sequence is Prolactin-3D4 (223 aa).

An N-terminal signal peptide occupies residues 1–28 (MQLTLTLSGSSMQLLLLVSNLLLWENMA). 2 disulfide bridges follow: cysteine 80/cysteine 198 and cysteine 215/cysteine 223. 2 N-linked (GlcNAc...) asparagine glycosylation sites follow: asparagine 108 and asparagine 157.

It belongs to the somatotropin/prolactin family. Post-translationally, N-glycosylated.

It is found in the secreted. The chain is Prolactin-3D4 (Prl3d4) from Rattus norvegicus (Rat).